We begin with the raw amino-acid sequence, 86 residues long: Small ribosomal subunit protein bS20 (86 aa).

Belongs to the bacterial ribosomal protein bS20 family.

Binds directly to 16S ribosomal RNA. This Kocuria rhizophila (strain ATCC 9341 / DSM 348 / NBRC 103217 / DC2201) protein is Small ribosomal subunit protein bS20.